Reading from the N-terminus, the 701-residue chain is T-cell immunomodulatory protein homolog (701 aa).

Positions 1 to 29 (MVKCGKYVLILELLLLTLLYNLIKRVSNS) are cleaved as a signal peptide. At 30–657 (GETVSSFVDG…IQLSVNPSNK (628 aa)) the chain is on the extracellular side. Asn148, Asn180, Asn217, Asn258, Asn458, Asn522, and Asn571 each carry an N-linked (GlcNAc...) asparagine glycan. A helical transmembrane segment spans residues 658–678 (FYSIIYITLICLSVIGVLIFI). Topologically, residues 679–701 (LDRKEKIEDSKEEMGFKSHFVIG) are cytoplasmic.

It belongs to the TIP family.

It is found in the membrane. In terms of biological role, may protect the parasite against attack by the host immune system by immunomodulation. The protein is T-cell immunomodulatory protein homolog of Plasmodium yoelii yoelii.